A 280-amino-acid chain; its full sequence is Phosphatidylglycerol--prolipoprotein diacylglyceryl transferase (280 aa).

Helical transmembrane passes span 59–79 and 97–117; these read FLTW…ILFY and GGMS…LFTW. A 1,2-diacyl-sn-glycero-3-phospho-(1'-sn-glycerol) is bound at residue R142. A run of 2 helical transmembrane segments spans residues 207 to 227 and 233 to 253; these read GFLA…CECF and FIGF…PMAI.

It belongs to the Lgt family.

The protein localises to the cell inner membrane. It catalyses the reaction L-cysteinyl-[prolipoprotein] + a 1,2-diacyl-sn-glycero-3-phospho-(1'-sn-glycerol) = an S-1,2-diacyl-sn-glyceryl-L-cysteinyl-[prolipoprotein] + sn-glycerol 1-phosphate + H(+). The protein operates within protein modification; lipoprotein biosynthesis (diacylglyceryl transfer). Functionally, catalyzes the transfer of the diacylglyceryl group from phosphatidylglycerol to the sulfhydryl group of the N-terminal cysteine of a prolipoprotein, the first step in the formation of mature lipoproteins. This is Phosphatidylglycerol--prolipoprotein diacylglyceryl transferase from Gluconacetobacter diazotrophicus (strain ATCC 49037 / DSM 5601 / CCUG 37298 / CIP 103539 / LMG 7603 / PAl5).